Consider the following 160-residue polypeptide: Small ribosomal subunit protein uS9 (160 aa).

The protein belongs to the universal ribosomal protein uS9 family.

The chain is Small ribosomal subunit protein uS9 from Xanthobacter autotrophicus (strain ATCC BAA-1158 / Py2).